The sequence spans 241 residues: 4-hydroxy-tetrahydrodipicolinate reductase (241 aa).

Residues 80–82 (ATT) and 104–107 (SANM) each bind NAD(+). His136 (proton donor/acceptor) is an active-site residue. His137 is a binding site for (S)-2,3,4,5-tetrahydrodipicolinate. Catalysis depends on Lys140, which acts as the Proton donor. 146-147 (GT) contacts (S)-2,3,4,5-tetrahydrodipicolinate.

It belongs to the DapB family.

It localises to the cytoplasm. It carries out the reaction (S)-2,3,4,5-tetrahydrodipicolinate + NAD(+) + H2O = (2S,4S)-4-hydroxy-2,3,4,5-tetrahydrodipicolinate + NADH + H(+). The enzyme catalyses (S)-2,3,4,5-tetrahydrodipicolinate + NADP(+) + H2O = (2S,4S)-4-hydroxy-2,3,4,5-tetrahydrodipicolinate + NADPH + H(+). It participates in amino-acid biosynthesis; L-lysine biosynthesis via DAP pathway; (S)-tetrahydrodipicolinate from L-aspartate: step 4/4. Catalyzes the conversion of 4-hydroxy-tetrahydrodipicolinate (HTPA) to tetrahydrodipicolinate. In Staphylococcus haemolyticus (strain JCSC1435), this protein is 4-hydroxy-tetrahydrodipicolinate reductase.